The chain runs to 153 residues: Ribonuclease H (153 aa).

Residues 4-145 (SVDSVELFTD…ADQLANRGVD (142 aa)) form the RNase H type-1 domain. Residues aspartate 13, glutamate 51, aspartate 73, and aspartate 137 each contribute to the Mg(2+) site.

This sequence belongs to the RNase H family. As to quaternary structure, monomer. Mg(2+) serves as cofactor.

It is found in the cytoplasm. It catalyses the reaction Endonucleolytic cleavage to 5'-phosphomonoester.. Functionally, endonuclease that specifically degrades the RNA of RNA-DNA hybrids. In Pseudomonas fluorescens (strain Pf0-1), this protein is Ribonuclease H.